The primary structure comprises 635 residues: Threonine--tRNA ligase (635 aa).

In terms of domain architecture, TGS spans 1 to 61 (MIQITLPDSS…SQDSALSIVT (61 aa)). Residues 242–533 (DHRKLGKELD…LIEEHAGALP (292 aa)) are catalytic. Zn(2+) contacts are provided by C333, H384, and H510.

This sequence belongs to the class-II aminoacyl-tRNA synthetase family. In terms of assembly, homodimer. Zn(2+) is required as a cofactor.

It is found in the cytoplasm. It catalyses the reaction tRNA(Thr) + L-threonine + ATP = L-threonyl-tRNA(Thr) + AMP + diphosphate + H(+). Its function is as follows. Catalyzes the attachment of threonine to tRNA(Thr) in a two-step reaction: L-threonine is first activated by ATP to form Thr-AMP and then transferred to the acceptor end of tRNA(Thr). Also edits incorrectly charged L-seryl-tRNA(Thr). The sequence is that of Threonine--tRNA ligase from Polaromonas naphthalenivorans (strain CJ2).